The chain runs to 223 residues: Twisted gastrulation protein homolog 1 (223 aa).

The N-terminal stretch at 1–25 (MKLHYVAVLTLAILMFLTWLPESLS) is a signal peptide. 2 N-linked (GlcNAc...) asparagine glycosylation sites follow: asparagine 52 and asparagine 81.

It belongs to the twisted gastrulation protein family. In terms of assembly, interacts with CHRD and BMP4. This interaction enhances CHRD/BMP4 complex formation. Interacts with BMP7.

Its subcellular location is the secreted. May be involved in dorsoventral axis formation. Seems to antagonize BMP signaling by forming ternary complexes with CHRD and BMPs, thereby preventing BMPs from binding to their receptors. In addition to the anti-BMP function, also has pro-BMP activity, partly mediated by cleavage and degradation of CHRD, which releases BMPs from ternary complexes. May be an important modulator of BMP-regulated cartilage development and chondrocyte differentiation. May play a role in thymocyte development. The chain is Twisted gastrulation protein homolog 1 (TWSG1) from Homo sapiens (Human).